The chain runs to 472 residues: Cysteine--tRNA ligase (472 aa).

Residue Cys29 coordinates Zn(2+). A 'HIGH' region motif is present at residues 31 to 41; that stretch reads PTVYNYIHIGN. Cys214, His239, and Glu243 together coordinate Zn(2+). Positions 273-277 match the 'KMSKS' region motif; it reads KMSKS. Lys276 provides a ligand contact to ATP.

The protein belongs to the class-I aminoacyl-tRNA synthetase family. Monomer. Zn(2+) is required as a cofactor.

Its subcellular location is the cytoplasm. It catalyses the reaction tRNA(Cys) + L-cysteine + ATP = L-cysteinyl-tRNA(Cys) + AMP + diphosphate. The polypeptide is Cysteine--tRNA ligase (Lactobacillus gasseri (strain ATCC 33323 / DSM 20243 / BCRC 14619 / CIP 102991 / JCM 1131 / KCTC 3163 / NCIMB 11718 / NCTC 13722 / AM63)).